The sequence spans 417 residues: L-rhamnose isomerase (417 aa).

3 residues coordinate Mn(2+): His-261, Asp-293, and Asp-295.

The protein belongs to the rhamnose isomerase family. Requires Mn(2+) as cofactor.

Its subcellular location is the cytoplasm. It carries out the reaction L-rhamnopyranose = L-rhamnulose. It participates in carbohydrate degradation; L-rhamnose degradation; glycerone phosphate from L-rhamnose: step 1/3. Its function is as follows. Catalyzes the interconversion of L-rhamnose and L-rhamnulose. This Oceanobacillus iheyensis (strain DSM 14371 / CIP 107618 / JCM 11309 / KCTC 3954 / HTE831) protein is L-rhamnose isomerase.